The following is a 176-amino-acid chain: Scytalone dehydratase-like protein AacuK (176 aa).

Substrate-binding residues include Tyr-26 and Tyr-46. Catalysis depends on residues His-81 and His-107.

This sequence belongs to the scytalone dehydratase family.

It participates in secondary metabolite biosynthesis. Its function is as follows. Scytalone dehydratase-like protein; part of the gene cluster that mediates the biosynthesis of the tetrahydroxanthone dimer secalonic acid D. The pathway begins with the synthesis of atrochrysone thioester by the polyketide synthase AacuL. The atrochrysone carboxyl ACP thioesterase AacuM then breaks the thioester bond and releases the atrochrysone carboxylic acid from AacuL. Atrochrysone carboxylic acid is decarboxylated by the decarboxylase AacuI, and oxidized by the anthrone oxygenase AacuG to yield emodin. Emodin is then reduced to emodin hydroquinone by a yet unidentified oxidoreductase. A-ring reduction by the short chain dehydrogenase AacuN, dehydration by the scytalone dehydratase-like protein AacuK and probable spontaneous re-oxidation, results in overall deoxygenation to chrysophanol. Baeyer-Villiger oxidation by the Baeyer-Villiger monooxygenase (BVMO) AacuH then yields monodictyphenone. Monodictyphenone is transformed into compounds with the tetrahydroxanthone skeleton via methylesterification by the methyltransferase AacuQ, followed by the action of the flavin-dependent monooxygenase AacuC, the isomerase AacuP, and the short chain dehydrogenase/reductase AacuF or AacuD. AacuF and AacuD should accept the same compound as a substrate but perform the ketoreduction with a different stereoselectivity, thus yielding blennolides B and A, respectively. In the final step of the biosynthesis, the cytochrome P450 monooxygenase AacuE accepts blennolide B and/or blennolide A to conduct the dimerization reaction to furnish the tetrahydroxanthone dimers, secalonic acids D, B, and F. The protein is Scytalone dehydratase-like protein AacuK of Aspergillus aculeatus (strain ATCC 16872 / CBS 172.66 / WB 5094).